The chain runs to 620 residues: MGKVIGIDLGTTNSAMAVYEGNEAKIIANKEGKNTTPSIVAFTDKGEILVGESAKRQAVTNPEKTIYSIKRIMGLMFNEDKAKEAEKRLPYKIVDRNGACAIEISGKVYTPQEISAKILMKLKEDAESYLGESVTEAVITVPAYFNDSQRKATKEAGTIAGLNVLRIINEPTSAALAYGLDKKESEKIMVYDLGGGTFDVTVLETGDNVVEVLATGGDAFLGGDDFDNRVIDFLASEFKSETGIEIKNDVMALQRLKEAAENAKKELSSAMETEINLPFITADATGPKHLVKKLTRAKFESLTEDLMEETISKIESVIKDAGLTKNEISEVVMVGGSTRIPKVQERVKAFINKELNKSVNPDEVVAVGASIQGGVLKGDVKDVLLLDVTPLSLGIETLGGVMTKVIDRGTTIPAKKSQVFSTAEDNQPAVSIMVLQGERELARDNKSLGKFDLQGIAPAPRGVPQIEVTFDIDANGILTVSAQDKNTGKSQEIKISGSSGLSDSEIEKMVKDAELHKEEDARKKEVIEARNHADSLAHQTQKSLDEHKTNLNENDANEIQNAINALKDCIKNDNATKAELEDKTKALAQAAQKLGEAMANKNNAEQPKKKDDDVIDAEVE.

The residue at position 197 (Thr-197) is a Phosphothreonine; by autocatalysis. Residues 591-620 (AQKLGEAMANKNNAEQPKKKDDDVIDAEVE) form a disordered region.

The protein belongs to the heat shock protein 70 family.

Its function is as follows. Acts as a chaperone. In Helicobacter pylori (strain HPAG1), this protein is Chaperone protein DnaK.